The chain runs to 611 residues: Dihydroxy-acid dehydratase (611 aa).

Aspartate 81 is a Mg(2+) binding site. Cysteine 122 serves as a coordination point for [2Fe-2S] cluster. Positions 123 and 124 each coordinate Mg(2+). Lysine 124 carries the post-translational modification N6-carboxylysine. Cysteine 195 serves as a coordination point for [2Fe-2S] cluster. A Mg(2+)-binding site is contributed by glutamate 491. Serine 517 functions as the Proton acceptor in the catalytic mechanism.

This sequence belongs to the IlvD/Edd family. Homodimer. [2Fe-2S] cluster serves as cofactor. It depends on Mg(2+) as a cofactor.

It carries out the reaction (2R)-2,3-dihydroxy-3-methylbutanoate = 3-methyl-2-oxobutanoate + H2O. The enzyme catalyses (2R,3R)-2,3-dihydroxy-3-methylpentanoate = (S)-3-methyl-2-oxopentanoate + H2O. It participates in amino-acid biosynthesis; L-isoleucine biosynthesis; L-isoleucine from 2-oxobutanoate: step 3/4. It functions in the pathway amino-acid biosynthesis; L-valine biosynthesis; L-valine from pyruvate: step 3/4. Functionally, functions in the biosynthesis of branched-chain amino acids. Catalyzes the dehydration of (2R,3R)-2,3-dihydroxy-3-methylpentanoate (2,3-dihydroxy-3-methylvalerate) into 2-oxo-3-methylpentanoate (2-oxo-3-methylvalerate) and of (2R)-2,3-dihydroxy-3-methylbutanoate (2,3-dihydroxyisovalerate) into 2-oxo-3-methylbutanoate (2-oxoisovalerate), the penultimate precursor to L-isoleucine and L-valine, respectively. The protein is Dihydroxy-acid dehydratase of Brucella anthropi (strain ATCC 49188 / DSM 6882 / CCUG 24695 / JCM 21032 / LMG 3331 / NBRC 15819 / NCTC 12168 / Alc 37) (Ochrobactrum anthropi).